Here is an 860-residue protein sequence, read N- to C-terminus: MQEQYRPEEIESKVQLHWDEKRTFEVTEDESKEKYYCLSMLPYPSGRLHMGHVRNYTIGDVIARYQRMLGKNVLQPIGWDAFGLPAEGAAVKNNTAPAPWTYDNIAYMKNQLKMLGFGYDWSRELATCTPEYYRWEQKFFTELYKKGLVYKKTSAVNWCPNDQTVLANEQVIDGCCWRCDTKVERKEIPQWFIKITAYADELLNDLDKLDHWPDTVKTMQRNWIGRSEGVEITFNVNDYDNTLTVYTTRPDTFMGCTYLAVAAGHPLAQKAAENNPELAAFIDECRNTKVAEAEMATMEKKGVDTGFKAVHPLTGEEIPVWAANFVLMEYGTGAVMAVPGHDQRDYEFASKYGLNIKPVILAADGSEPDLSQQALTEKGVLFNSGEFNGLDHEAAFNAIADKLTAMGVGERKVNYRLRDWGVSRQRYWGAPIPMVTLEDGTVMPTPDDQLPVILPEDVVMDGITSPIKADPEWAKTTVNGMPALRETDTFDTFMESSWYYARYTCPQYKEGMLDSEAANYWLPVDIYIGGIEHAIMHLLYFRFFHKLMRDAGMVNSDEPAKQLLCQGMVLADAFYYVGENGERNWVSPVDAIVERDEKGRIVKAKDAAGHELVYTGMSKMSKSKNNGIDPQVMVERYGADTVRLFMMFASPADMTLEWQESGVEGANRFLKRVWKLVYEHTAKGDVAALNVDALTENQKALRRDVHKTIAKVTDDIGRRQTFNTAIAAIMELMNKLAKAPTDGEQDRALMQEALLAVVRMLNPFTPHICFTLWQELKGEGDIDNAPWPVADEKAMVEDSTLVVVQVNGKVRAKITVPVDATEEQVRERAGQEHLVAKYLDGVTVRKVIYVPGKLLNLVVG.

The 'HIGH' region signature appears at 42 to 52 (PYPSGRLHMGH). The 'KMSKS' region motif lies at 619-623 (KMSKS). Position 622 (Lys-622) interacts with ATP.

Belongs to the class-I aminoacyl-tRNA synthetase family.

It localises to the cytoplasm. It catalyses the reaction tRNA(Leu) + L-leucine + ATP = L-leucyl-tRNA(Leu) + AMP + diphosphate. The protein is Leucine--tRNA ligase of Escherichia coli (strain K12 / MC4100 / BW2952).